Reading from the N-terminus, the 387-residue chain is Succinate--CoA ligase [ADP-forming] subunit beta (387 aa).

The ATP-grasp domain occupies 9-244 (KHILSKFGVN…YDEEIKEEIE (236 aa)). Residues Lys-46, 53–55 (GRG), Glu-99, Cys-102, and Glu-107 each bind ATP. Asn-199 and Asp-213 together coordinate Mg(2+). Substrate contacts are provided by residues Asn-264 and 321–323 (GIM).

The protein belongs to the succinate/malate CoA ligase beta subunit family. In terms of assembly, heterotetramer of two alpha and two beta subunits. The cofactor is Mg(2+).

It catalyses the reaction succinate + ATP + CoA = succinyl-CoA + ADP + phosphate. The enzyme catalyses GTP + succinate + CoA = succinyl-CoA + GDP + phosphate. The protein operates within carbohydrate metabolism; tricarboxylic acid cycle; succinate from succinyl-CoA (ligase route): step 1/1. Succinyl-CoA synthetase functions in the citric acid cycle (TCA), coupling the hydrolysis of succinyl-CoA to the synthesis of either ATP or GTP and thus represents the only step of substrate-level phosphorylation in the TCA. The beta subunit provides nucleotide specificity of the enzyme and binds the substrate succinate, while the binding sites for coenzyme A and phosphate are found in the alpha subunit. In Ehrlichia chaffeensis (strain ATCC CRL-10679 / Arkansas), this protein is Succinate--CoA ligase [ADP-forming] subunit beta.